A 288-amino-acid chain; its full sequence is N-acetylneuraminate lyase (288 aa).

Residues Ser44 and Thr45 each contribute to the aceneuramate site. Tyr133 (proton donor) is an active-site residue. Residue Lys161 is the Schiff-base intermediate with substrate of the active site. Positions 163, 185, 187, 188, and 204 each coordinate aceneuramate.

This sequence belongs to the DapA family. NanA subfamily. Homotetramer.

The protein resides in the cytoplasm. The catalysed reaction is aceneuramate = aldehydo-N-acetyl-D-mannosamine + pyruvate. It participates in amino-sugar metabolism; N-acetylneuraminate degradation; D-fructose 6-phosphate from N-acetylneuraminate: step 1/5. Functionally, catalyzes the reversible aldol cleavage of N-acetylneuraminic acid (sialic acid; Neu5Ac) to form pyruvate and N-acetylmannosamine (ManNAc) via a Schiff base intermediate. The protein is N-acetylneuraminate lyase of Clostridium perfringens (strain SM101 / Type A).